The sequence spans 447 residues: SLKGMISVGPWGGSGGNYWSFKANHAITEIVIHVKDNIKSISFKDASGDISGTFGGKDPRENEKGDEKKIKIHWPTEYLKSISGSYGDYNGVLVIRSLSFITNLTTYGPFGSTSGGESFSIPIADSVVVGFHGRAGYYLDALGIFVQPVPHGTISFGPWGGPAGDDAFNFKVGSWIKDIIIYADAAINSIAFKDANGHCYGKFGGQDPNDIGVEKKVEIDGNLEHLKSISGTYGNYKGFEVVTSLSFITNVTKHGPFGIASGTSFSIPIEGSLVTGFHGKSGYYLDSIGIYVKPRDVEGSISIGPWGGSGGDPWSYTANEGINQIIIYAGSNIKSVAFKDTSGLDSATFGGVNPKDTGEKNTVSINWPSEYLTSISGTYGQYKFKDVFTTITSLSFTTNLATYGPFGKASATSFSIPIHNNMVVGFHGRAGDYLDAIGIFVKPDTAV.

Tandem repeats lie at residues 1–149, 150–295, and 296–447. A 3 X approximate tandem repeats region spans residues 1-447; it reads SLKGMISVGP…GIFVKPDTAV (447 aa). 3 Jacalin-type lectin domains span residues 5 to 148, 153 to 294, and 300 to 443; these read MISV…FVQP, TISF…YVKP, and SISI…FVKP.

The protein belongs to the jacalin lectin family. In terms of assembly, homodimer. The N-terminus is blocked.

Mannose/glucose specific lectin. Shows agglutinating activity against rabbit erythrocytes. The protein is Mannose/glucose-specific lectin of Parkia platycephala.